A 79-amino-acid polypeptide reads, in one-letter code: ATP synthase subunit c (79 aa).

2 helical membrane passes run 11–31 (MAAA…IGIL) and 53–73 (FFIV…LGLY).

It belongs to the ATPase C chain family. In terms of assembly, F-type ATPases have 2 components, F(1) - the catalytic core - and F(0) - the membrane proton channel. F(1) has five subunits: alpha(3), beta(3), gamma(1), delta(1), epsilon(1). F(0) has three main subunits: a(1), b(2) and c(10-14). The alpha and beta chains form an alternating ring which encloses part of the gamma chain. F(1) is attached to F(0) by a central stalk formed by the gamma and epsilon chains, while a peripheral stalk is formed by the delta and b chains.

The protein localises to the cell inner membrane. Its function is as follows. F(1)F(0) ATP synthase produces ATP from ADP in the presence of a proton or sodium gradient. F-type ATPases consist of two structural domains, F(1) containing the extramembraneous catalytic core and F(0) containing the membrane proton channel, linked together by a central stalk and a peripheral stalk. During catalysis, ATP synthesis in the catalytic domain of F(1) is coupled via a rotary mechanism of the central stalk subunits to proton translocation. In terms of biological role, key component of the F(0) channel; it plays a direct role in translocation across the membrane. A homomeric c-ring of between 10-14 subunits forms the central stalk rotor element with the F(1) delta and epsilon subunits. The sequence is that of ATP synthase subunit c from Citrobacter koseri (strain ATCC BAA-895 / CDC 4225-83 / SGSC4696).